A 291-amino-acid polypeptide reads, in one-letter code: Protease HtpX homolog (291 aa).

The next 2 membrane-spanning stretches (helical) occupy residues 4 to 24 (VVLFLLTNLAVMLVLSVSARI) and 38 to 58 (MGMLLVFAALIGFGGSFISLL). Zn(2+) is bound at residue His-144. Glu-145 is a catalytic residue. His-148 is a Zn(2+) binding site. 2 helical membrane passes run 152-172 (GDMVTLTLIQGVVNTFVIFLS) and 199-219 (ISSIAFEIMFGILASVVVMCF). Residue Glu-224 coordinates Zn(2+).

Belongs to the peptidase M48B family. Requires Zn(2+) as cofactor.

The protein localises to the cell inner membrane. The chain is Protease HtpX homolog from Chlorobium limicola (strain DSM 245 / NBRC 103803 / 6330).